The sequence spans 405 residues: Probable tRNA sulfurtransferase (405 aa).

Residues 60–165 (AEVDKRLKKV…QDAVYISNQL (106 aa)) enclose the THUMP domain. ATP-binding positions include 183–184 (ML), 208–209 (HF), arginine 265, glycine 287, and glutamine 296.

The protein belongs to the ThiI family.

The protein resides in the cytoplasm. It catalyses the reaction [ThiI sulfur-carrier protein]-S-sulfanyl-L-cysteine + a uridine in tRNA + 2 reduced [2Fe-2S]-[ferredoxin] + ATP + H(+) = [ThiI sulfur-carrier protein]-L-cysteine + a 4-thiouridine in tRNA + 2 oxidized [2Fe-2S]-[ferredoxin] + AMP + diphosphate. It carries out the reaction [ThiS sulfur-carrier protein]-C-terminal Gly-Gly-AMP + S-sulfanyl-L-cysteinyl-[cysteine desulfurase] + AH2 = [ThiS sulfur-carrier protein]-C-terminal-Gly-aminoethanethioate + L-cysteinyl-[cysteine desulfurase] + A + AMP + 2 H(+). It participates in cofactor biosynthesis; thiamine diphosphate biosynthesis. Catalyzes the ATP-dependent transfer of a sulfur to tRNA to produce 4-thiouridine in position 8 of tRNAs, which functions as a near-UV photosensor. Also catalyzes the transfer of sulfur to the sulfur carrier protein ThiS, forming ThiS-thiocarboxylate. This is a step in the synthesis of thiazole, in the thiamine biosynthesis pathway. The sulfur is donated as persulfide by IscS. This Lactobacillus helveticus (strain DPC 4571) protein is Probable tRNA sulfurtransferase.